We begin with the raw amino-acid sequence, 245 residues long: Exosome complex component RRP41 (245 aa).

Ala-2 is modified (N-acetylalanine).

This sequence belongs to the RNase PH family. In terms of assembly, component of the RNA exosome core complex (Exo-9), composed of EXOSC1, EXOSC2, EXOSC3, EXOSC4, EXOSC5, EXOSC6, EXOSC7, EXOSC8 and EXOSC9; within the complex interacts with EXOSC2, EXOSC7 and EXOSC9. The catalytically inactive RNA exosome core complex (Exo-9) associates with the catalytic subunit EXOSC10/RRP6. Exo-9 may associate with DIS3 to form the nucleolar exosome complex, or DIS3L to form the cytoplasmic exosome complex. Exo-9 is formed by a hexameric base ring consisting of the heterodimers EXOSC4-EXOSC9, EXOSC5-EXOSC8 and EXOSC6-EXOSC7, and a cap ring consisting of EXOSC1, EXOSC2 and EXOSC3. The RNA exosome complex associates with cofactors C1D/RRP47, MPHOSPH6/MPP6 and MTREX/MTR4. Interacts with DDX60. Interacts with DIS3; the interaction is direct.

The protein localises to the cytoplasm. It is found in the nucleus. Its subcellular location is the nucleolus. It localises to the nucleoplasm. Non-catalytic component of the RNA exosome complex which has 3'-&gt;5' exoribonuclease activity and participates in a multitude of cellular RNA processing and degradation events. In the nucleus, the RNA exosome complex is involved in proper maturation of stable RNA species such as rRNA, snRNA and snoRNA, in the elimination of RNA processing by-products and non-coding 'pervasive' transcripts, such as antisense RNA species and promoter-upstream transcripts (PROMPTs), and of mRNAs with processing defects, thereby limiting or excluding their export to the cytoplasm. The RNA exosome may be involved in Ig class switch recombination (CSR) and/or Ig variable region somatic hypermutation (SHM) by targeting AICDA deamination activity to transcribed dsDNA substrates. In the cytoplasm, the RNA exosome complex is involved in general mRNA turnover and specifically degrades inherently unstable mRNAs containing AU-rich elements (AREs) within their 3' untranslated regions, and in RNA surveillance pathways, preventing translation of aberrant mRNAs. It seems to be involved in degradation of histone mRNA. The catalytic inactive RNA exosome core complex of 9 subunits (Exo-9) is proposed to play a pivotal role in the binding and presentation of RNA for ribonucleolysis, and to serve as a scaffold for the association with catalytic subunits and accessory proteins or complexes. EXOSC4 binds to ARE-containing RNAs. The protein is Exosome complex component RRP41 (EXOSC4) of Bos taurus (Bovine).